The primary structure comprises 222 residues: PKHD-type hydroxylase Syncc9902_2001 (222 aa).

The Fe2OG dioxygenase domain maps to 80–174 (RVHSILISRS…RLVCVGWIES (95 aa)). Fe cation is bound by residues His-98, Asp-100, and His-155. Arg-165 serves as a coordination point for 2-oxoglutarate.

It depends on Fe(2+) as a cofactor. L-ascorbate is required as a cofactor.

In Synechococcus sp. (strain CC9902), this protein is PKHD-type hydroxylase Syncc9902_2001.